The primary structure comprises 329 residues: Ribosomal RNA small subunit methyltransferase H (329 aa).

S-adenosyl-L-methionine contacts are provided by residues 39–41, Asp56, Phe85, Asp106, and Gln113; that span reads GGY. A disordered region spans residues 289–308; that stretch reads SGAIRPTPEEEARNPRARSA.

The protein belongs to the methyltransferase superfamily. RsmH family.

The protein localises to the cytoplasm. The catalysed reaction is cytidine(1402) in 16S rRNA + S-adenosyl-L-methionine = N(4)-methylcytidine(1402) in 16S rRNA + S-adenosyl-L-homocysteine + H(+). Specifically methylates the N4 position of cytidine in position 1402 (C1402) of 16S rRNA. The sequence is that of Ribosomal RNA small subunit methyltransferase H from Novosphingobium aromaticivorans (strain ATCC 700278 / DSM 12444 / CCUG 56034 / CIP 105152 / NBRC 16084 / F199).